A 248-amino-acid polypeptide reads, in one-letter code: Pyridoxine 5'-phosphate synthase (248 aa).

A 3-amino-2-oxopropyl phosphate-binding site is contributed by Asn-7. Asp-9–His-10 is a binding site for 1-deoxy-D-xylulose 5-phosphate. A 3-amino-2-oxopropyl phosphate-binding site is contributed by Arg-18. Catalysis depends on His-43, which acts as the Proton acceptor. Residues Arg-45 and His-50 each coordinate 1-deoxy-D-xylulose 5-phosphate. The active-site Proton acceptor is Glu-70. Residue Thr-100 participates in 1-deoxy-D-xylulose 5-phosphate binding. Catalysis depends on His-191, which acts as the Proton donor. Residues Gly-192 and Gly-213 to His-214 contribute to the 3-amino-2-oxopropyl phosphate site.

Belongs to the PNP synthase family. Homooctamer; tetramer of dimers.

It localises to the cytoplasm. The catalysed reaction is 3-amino-2-oxopropyl phosphate + 1-deoxy-D-xylulose 5-phosphate = pyridoxine 5'-phosphate + phosphate + 2 H2O + H(+). Its pathway is cofactor biosynthesis; pyridoxine 5'-phosphate biosynthesis; pyridoxine 5'-phosphate from D-erythrose 4-phosphate: step 5/5. Functionally, catalyzes the complicated ring closure reaction between the two acyclic compounds 1-deoxy-D-xylulose-5-phosphate (DXP) and 3-amino-2-oxopropyl phosphate (1-amino-acetone-3-phosphate or AAP) to form pyridoxine 5'-phosphate (PNP) and inorganic phosphate. The sequence is that of Pyridoxine 5'-phosphate synthase from Bordetella bronchiseptica (strain ATCC BAA-588 / NCTC 13252 / RB50) (Alcaligenes bronchisepticus).